A 645-amino-acid polypeptide reads, in one-letter code: Cysteine-rich receptor-like protein kinase 10 (645 aa).

The signal sequence occupies residues 1-27 (MSMACYYLAAAAAGLALLLLHAPLTDA). 2 Gnk2-homologous domains span residues 28-132 (QTLV…NDAF) and 140-251 (SQGM…VYPF). Topologically, residues 28–283 (QTLVPLCGDS…AGERSKNKRS (256 aa)) are extracellular. Asparagine 39 and asparagine 91 each carry an N-linked (GlcNAc...) asparagine glycan. 2 cysteine pairs are disulfide-bonded: cysteine 86–cysteine 95 and cysteine 98–cysteine 123. N-linked (GlcNAc...) asparagine glycosylation is found at asparagine 151 and asparagine 169. 2 disulfide bridges follow: cysteine 204/cysteine 213 and cysteine 216/cysteine 242. Residues 284–304 (AILAISMPTIALVLATIAAWF) traverse the membrane as a helical segment. The Cytoplasmic segment spans residues 305 to 645 (CSTSWRRRRL…WVQEIGATAS (341 aa)). A Protein kinase domain is found at 348-619 (FSEHKRLGEG…PLMSAVNAML (272 aa)). Residues 354–362 (LGEGGFGVV) and lysine 376 each bind ATP. Aspartate 473 (proton acceptor) is an active-site residue.

The protein belongs to the protein kinase superfamily. Ser/Thr protein kinase family. CRK subfamily.

It localises to the membrane. In terms of biological role, involved in disease resistance. Required for NPR1/NH1-mediated immunity to the bacterial blight pathogen Xanthomomas oryzae pv. oryzae (Xoo). Required for the benzothiadiazole (BTH)-induced immune response. Probably regulated by the transcription factor TGA2.1. The protein is Cysteine-rich receptor-like protein kinase 10 of Oryza sativa subsp. japonica (Rice).